The sequence spans 484 residues: tRNA sulfurtransferase (484 aa).

The THUMP domain occupies 63–167; that stretch reads DVFADRLACI…QDKLYMVERR (105 aa). ATP contacts are provided by residues 185-186, Lys-267, Gly-289, and Gln-298; that span reads LI. A disulfide bridge links Cys-346 with Cys-458. Residues 406 to 484 form the Rhodanese domain; it reads VASGEIIIDV…GYTNVKVYRP (79 aa). Cys-458 functions as the Cysteine persulfide intermediate in the catalytic mechanism.

It belongs to the ThiI family.

Its subcellular location is the cytoplasm. It catalyses the reaction [ThiI sulfur-carrier protein]-S-sulfanyl-L-cysteine + a uridine in tRNA + 2 reduced [2Fe-2S]-[ferredoxin] + ATP + H(+) = [ThiI sulfur-carrier protein]-L-cysteine + a 4-thiouridine in tRNA + 2 oxidized [2Fe-2S]-[ferredoxin] + AMP + diphosphate. The catalysed reaction is [ThiS sulfur-carrier protein]-C-terminal Gly-Gly-AMP + S-sulfanyl-L-cysteinyl-[cysteine desulfurase] + AH2 = [ThiS sulfur-carrier protein]-C-terminal-Gly-aminoethanethioate + L-cysteinyl-[cysteine desulfurase] + A + AMP + 2 H(+). Its pathway is cofactor biosynthesis; thiamine diphosphate biosynthesis. In terms of biological role, catalyzes the ATP-dependent transfer of a sulfur to tRNA to produce 4-thiouridine in position 8 of tRNAs, which functions as a near-UV photosensor. Also catalyzes the transfer of sulfur to the sulfur carrier protein ThiS, forming ThiS-thiocarboxylate. This is a step in the synthesis of thiazole, in the thiamine biosynthesis pathway. The sulfur is donated as persulfide by IscS. The chain is tRNA sulfurtransferase from Shewanella frigidimarina (strain NCIMB 400).